A 293-amino-acid chain; its full sequence is Inhibitory synaptic factor 1 (293 aa).

Positions 1–26 (MNIRGAPDLGQPSDDPSSGGERERIR) are disordered. A coiled-coil region spans residues 30–63 (KMVIGQLEGILRELKEVAKELREVVSQIDKLTSD). Disordered regions lie at residues 120 to 186 (TPSD…RERV) and 200 to 293 (DDEE…RGKN). A compositionally biased stretch (polar residues) spans 171 to 180 (VKSQLPQRTP). Residues 200–215 (DDEEGDGEQEVEEEEV) show a composition bias toward acidic residues. Composition is skewed to polar residues over residues 243–256 (SPLT…TLAP) and 264–286 (RNSS…TATR).

It belongs to the INSYN1 family. In terms of assembly, interacts with GPHN.

It localises to the postsynaptic density. Component of the protein machinery at the inhibitory synapses, probably acting as a scaffold. Inhibitory synapses dampen neuronal activity through postsynaptic hyperpolarization. This synaptic inhibition is fundamental for the functioning of the central nervous system, shaping and orchestrating the flow of information through neuronal networks to generate a precise neural code. The polypeptide is Inhibitory synaptic factor 1 (Homo sapiens (Human)).